We begin with the raw amino-acid sequence, 313 residues long: tRNA uridine(34) hydroxylase (313 aa).

The Rhodanese domain maps to 124 to 218; the sequence is SDPEVLLIDT…YLEEVPQQES (95 aa). The active-site Cysteine persulfide intermediate is the C178.

This sequence belongs to the TrhO family.

It carries out the reaction uridine(34) in tRNA + AH2 + O2 = 5-hydroxyuridine(34) in tRNA + A + H2O. Functionally, catalyzes oxygen-dependent 5-hydroxyuridine (ho5U) modification at position 34 in tRNAs. This Pseudomonas fluorescens (strain ATCC BAA-477 / NRRL B-23932 / Pf-5) protein is tRNA uridine(34) hydroxylase.